A 281-amino-acid polypeptide reads, in one-letter code: Probable endonuclease 4 (281 aa).

His69, His109, Glu145, Asp179, His182, His216, Asp229, His231, and Glu261 together coordinate Zn(2+).

This sequence belongs to the AP endonuclease 2 family. Zn(2+) serves as cofactor.

The enzyme catalyses Endonucleolytic cleavage to 5'-phosphooligonucleotide end-products.. Its function is as follows. Endonuclease IV plays a role in DNA repair. It cleaves phosphodiester bonds at apurinic or apyrimidinic (AP) sites, generating a 3'-hydroxyl group and a 5'-terminal sugar phosphate. The polypeptide is Probable endonuclease 4 (Yersinia enterocolitica serotype O:8 / biotype 1B (strain NCTC 13174 / 8081)).